Reading from the N-terminus, the 333-residue chain is Cathepsin M (333 aa).

A signal peptide spans Met1–Ala15. Residues Leu16–Asn113 constitute a propeptide, activation peptide. 2 disulfides stabilise this stretch: Cys135-Cys178 and Cys169-Cys211. Cys138 is a catalytic residue. N-linked (GlcNAc...) asparagine glycans are attached at residues Asn217, Asn221, and Asn268. An intrachain disulfide couples Cys269 to Cys322. Active-site residues include His276 and Asn300.

It belongs to the peptidase C1 family. Placenta.

It localises to the lysosome. This Mus musculus (Mouse) protein is Cathepsin M (Ctsm).